The primary structure comprises 292 residues: 2-(5''-triphosphoribosyl)-3'-dephosphocoenzyme-A synthase (292 aa).

Belongs to the CitG/MdcB family.

The enzyme catalyses 3'-dephospho-CoA + ATP = 2'-(5''-triphospho-alpha-D-ribosyl)-3'-dephospho-CoA + adenine. Its function is as follows. Catalyzes the formation of 2-(5''-triphosphoribosyl)-3'-dephosphocoenzyme-A, the precursor of the prosthetic group of the holo-acyl carrier protein (gamma chain) of citrate lyase, from ATP and dephospho-CoA. This is 2-(5''-triphosphoribosyl)-3'-dephosphocoenzyme-A synthase from Escherichia coli O139:H28 (strain E24377A / ETEC).